Here is an 827-residue protein sequence, read N- to C-terminus: 6-phosphofructo-2-kinase 1 (827 aa).

2 disordered regions span residues 1 to 97 (MFKP…ENSA) and 149 to 175 (TRHH…DGLI). Over residues 31–41 (SQDSSYDLLSR) the composition is skewed to low complexity. The span at 42–59 (SSDDKIDAEKGPHDELSK) shows a compositional bias: basic and acidic residues. Residues 72-97 (TPISSNWNSPGITEENTPSDSPENSA) show a composition bias toward polar residues. Serine 92 carries the phosphoserine modification. The residue at position 157 (threonine 157) is a Phosphothreonine. 190 to 197 (GLPATGKS) lines the ATP pocket. Catalysis depends on residues aspartate 277 and cysteine 309. A beta-D-fructose 6-phosphate-binding site is contributed by arginine 343. Serine 404 functions as the Phosphoserine intermediate in the catalytic mechanism. The active site involves glutamate 497. The active-site Proton donor is histidine 565. 4 positions are modified to phosphoserine: serine 644, serine 652, serine 659, and serine 667. Disordered stretches follow at residues 649-704 (APPS…SNFN) and 799-827 (HGKD…QSHV). A compositionally biased stretch (low complexity) spans 671-682 (SASSSQSELSEQ). Positions 683–704 (PKNSVSAQTGSNNTTLIGSNFN) are enriched in polar residues.

The catalysed reaction is beta-D-fructose 6-phosphate + ATP = beta-D-fructose 2,6-bisphosphate + ADP + H(+). With respect to regulation, phosphorylation results in the activation of the kinase activity. Functionally, synthesis of fructose 2,6-bisphosphate. This chain is 6-phosphofructo-2-kinase 1 (PFK26), found in Saccharomyces cerevisiae (strain ATCC 204508 / S288c) (Baker's yeast).